A 407-amino-acid polypeptide reads, in one-letter code: Elongation factor Tu (407 aa).

A tr-type G domain is found at 10–217; that stretch reads KPHVNVGTIG…TLDTYIPDPE (208 aa). The G1 stretch occupies residues 19 to 26; it reads GHVDHGKT. 19-26 is a GTP binding site; that stretch reads GHVDHGKT. T26 contacts Mg(2+). A G2 region spans residues 60-64; sequence GITIS. Residues 81–84 are G3; the sequence is DCPG. GTP is bound by residues 81–85 and 136–139; these read DCPGH and NKSD. Residues 136 to 139 are G4; sequence NKSD. The tract at residues 184 to 186 is G5; the sequence is SAL.

It belongs to the TRAFAC class translation factor GTPase superfamily. Classic translation factor GTPase family. EF-Tu/EF-1A subfamily. Monomer.

The protein resides in the cytoplasm. The catalysed reaction is GTP + H2O = GDP + phosphate + H(+). Functionally, GTP hydrolase that promotes the GTP-dependent binding of aminoacyl-tRNA to the A-site of ribosomes during protein biosynthesis. This Marinomonas sp. (strain MWYL1) protein is Elongation factor Tu.